The following is a 777-amino-acid chain: Protein translocase subunit SecA (777 aa).

ATP contacts are provided by residues Gln-94, 112 to 116 (GEGKT), and Asp-501.

This sequence belongs to the SecA family. Monomer and homodimer. Part of the essential Sec protein translocation apparatus which comprises SecA, SecYEG and auxiliary proteins SecDF. Other proteins may also be involved.

The protein localises to the cell membrane. Its subcellular location is the cytoplasm. It catalyses the reaction ATP + H2O + cellular proteinSide 1 = ADP + phosphate + cellular proteinSide 2.. Part of the Sec protein translocase complex. Interacts with the SecYEG preprotein conducting channel. Has a central role in coupling the hydrolysis of ATP to the transfer of proteins into and across the cell membrane, serving as an ATP-driven molecular motor driving the stepwise translocation of polypeptide chains across the membrane. In Mycobacterium avium (strain 104), this protein is Protein translocase subunit SecA.